A 323-amino-acid chain; its full sequence is Fructose-1,6-bisphosphatase class 1 (323 aa).

Mg(2+) is bound by residues glutamate 88, aspartate 107, leucine 109, and aspartate 110. Residues 110–113 and asparagine 200 each bind substrate; that span reads DGSS. Residue glutamate 272 participates in Mg(2+) binding.

This sequence belongs to the FBPase class 1 family. As to quaternary structure, homotetramer. It depends on Mg(2+) as a cofactor.

The protein resides in the cytoplasm. It carries out the reaction beta-D-fructose 1,6-bisphosphate + H2O = beta-D-fructose 6-phosphate + phosphate. The protein operates within carbohydrate biosynthesis; gluconeogenesis. This Acinetobacter baumannii (strain AYE) protein is Fructose-1,6-bisphosphatase class 1.